We begin with the raw amino-acid sequence, 328 residues long: E3 ubiquitin-protein ligase RING1-like (328 aa).

Ser-2 carries the N-acetylserine modification. The RING-type; atypical zinc finger occupies 216–257 (CAVCMDEFEDGSDVKQMPCKHVFHQDCLLPWLELHNSCPVCR). Positions 264-328 (DPDYENRSQG…NLETRGEDLD (65 aa)) are disordered. A compositionally biased stretch (gly residues) spans 306–319 (SGSGSGAPGTGGGN).

Auto-ubiquitinated as part of the enzymatic reaction. In terms of tissue distribution, expressed in leaves, roots, trichomes, stipules, and also in anthers and stigma of flowers.

It carries out the reaction S-ubiquitinyl-[E2 ubiquitin-conjugating enzyme]-L-cysteine + [acceptor protein]-L-lysine = [E2 ubiquitin-conjugating enzyme]-L-cysteine + N(6)-ubiquitinyl-[acceptor protein]-L-lysine.. It participates in protein modification; protein ubiquitination. Its function is as follows. E3 ubiquitin-protein ligase which accepts ubiquitin from an E2 ubiquitin-conjugating enzyme in the form of a thioester and then directly transfers the ubiquitin to targeted substrates. Promotes polyubiquitination of target proteins. The polypeptide is E3 ubiquitin-protein ligase RING1-like (Arabidopsis thaliana (Mouse-ear cress)).